Here is a 426-residue protein sequence, read N- to C-terminus: Enolase (426 aa).

Gln163 lines the (2R)-2-phosphoglycerate pocket. Glu205 functions as the Proton donor in the catalytic mechanism. Mg(2+)-binding residues include Asp242, Glu286, and Asp313. Lys338, Arg367, Ser368, and Lys389 together coordinate (2R)-2-phosphoglycerate. Lys338 (proton acceptor) is an active-site residue.

The protein belongs to the enolase family. Requires Mg(2+) as cofactor.

The protein localises to the cytoplasm. The protein resides in the secreted. It is found in the cell surface. It carries out the reaction (2R)-2-phosphoglycerate = phosphoenolpyruvate + H2O. It functions in the pathway carbohydrate degradation; glycolysis; pyruvate from D-glyceraldehyde 3-phosphate: step 4/5. Catalyzes the reversible conversion of 2-phosphoglycerate (2-PG) into phosphoenolpyruvate (PEP). It is essential for the degradation of carbohydrates via glycolysis. The sequence is that of Enolase from Gemmatimonas aurantiaca (strain DSM 14586 / JCM 11422 / NBRC 100505 / T-27).